The primary structure comprises 194 residues: Dof zinc finger protein DOF1.7 (194 aa).

Residues 33-87 form a Dof-type zinc finger; sequence LKCPRCDSPNTKFCYYNNYNLSQPRHFCKNCRRYWTKGGALRNIPVGGGTRKSNK. Residues Cys35, Cys38, Cys60, and Cys63 each contribute to the Zn(2+) site. The tract at residues 74 to 125 is disordered; sequence RNIPVGGGTRKSNKRSGSSPSSNLKNQTVAEKPDHHGSGSEEKEERVSGQEM. Low complexity predominate over residues 88 to 99; that stretch reads RSGSSPSSNLKN. Residues 104 to 121 are compositionally biased toward basic and acidic residues; it reads EKPDHHGSGSEEKEERVS.

It localises to the nucleus. In terms of biological role, transcription factor that binds specifically to a 5'-AA[AG]G-3' consensus core sequence. This chain is Dof zinc finger protein DOF1.7 (DOF1.7), found in Arabidopsis thaliana (Mouse-ear cress).